Here is a 315-residue protein sequence, read N- to C-terminus: Olfactory receptor 3A1 (315 aa).

Residues 1 to 28 (MQPESGANGTVIAEFILLGLLEAPGLQP) are Extracellular-facing. N-linked (GlcNAc...) asparagine glycosylation is present at Asn8. The helical transmembrane segment at 29–52 (VVFVLFLFAYLVTVRGNLSILAAV) threads the bilayer. Residues 53 to 60 (LVEPKLHT) lie on the Cytoplasmic side of the membrane. Residues 61–82 (PMYFFLGNLSVLDVGCISVTVP) form a helical membrane-spanning segment. Residues 83 to 103 (SMLSRLLSRKRAVPCGACLTQ) are Extracellular-facing. A disulfide bridge connects residues Cys100 and Cys192. Residues 104–123 (LFFFHLFVGVDCFLLTAMAY) traverse the membrane as a helical segment. Residues 124-143 (DRFLAICRPLTYSTRMSQTV) lie on the Cytoplasmic side of the membrane. The chain crosses the membrane as a helical span at residues 144 to 161 (QRMLVAASWACAFTNALT). At 162 to 199 (HTVAMSTLNFCGPNVINHFYCDLPQLFQLSCSSTQLNE) the chain is on the extracellular side. A helical transmembrane segment spans residues 200–223 (LLLFAVGFIMAGTPMALIVISYIH). Over 224–240 (VAAAVLRIRSVEGRKKA) the chain is Cytoplasmic. A helical transmembrane segment spans residues 241-264 (FSTCGSHLTVVAIFYGSGIFNYMR). Topologically, residues 265 to 275 (LGSTKLSDKDK) are extracellular. The chain crosses the membrane as a helical span at residues 276 to 295 (AVGIFNTVINPMLNPIIYSF). Topologically, residues 296–315 (RNPDVQSAIWRMLTGRRSLA) are cytoplasmic.

The protein belongs to the G-protein coupled receptor 1 family.

It localises to the cell membrane. Odorant receptor. In Homo sapiens (Human), this protein is Olfactory receptor 3A1 (OR3A1).